Reading from the N-terminus, the 681-residue chain is MMEKGIWKDALIQSTKKLSPKLQVKNPVMLLVYVGAILATSLYFLGFFGISDEKSGYTLAIALILWFTVLFANFAEAIAEGRGRAQADSLKMARKDVLARKLKNVDDKTDVIEVASNDLKKGDIVYVLANEQIPMDGEVIEGAASVDESAITGESAPVIRESGGDRSAVTGGTTLVSDWLVVRVTAVSGESFLDKMIAMVEGASRKKTPNEIALQILLVTLSIIFLAVSATLLPFTEFASKQAGAGSAISITNVIALLVCLAPTTIGALLSSIGIAGMSRLNQANVLAMSGRAIEAAGDVDVLLLDKTGTITLGNRKASEFLPVDGVTEQELADAAQLSSIADETAEGRSIVVLAKERFDIRGRDFAEMHAEFVPFTATTRMSGIDYQENTIRKGAADAVRAYVTANGGTYPKECDAIVSKVAGAGGTPLVVVRNNQVLGVIYLKDIVKNGVKERFLDLRKMGIKTIMITGDNPMTAAAIAAEAGVDDFLAEATPEAKLELIREYQREGHLVAMTGDGTNDAPALAQADVAVAMNTGTQAAKEAGNMVDLDSSPTKLIDIVRIGKQLLMTRGALTTFSVANDLAKYFAIIPVLFYGIFPQLEALNLMGLTSPTSAILSAIIYNAVIIIVLIPLSLKGVKYREMPAGKLLSRNMLIYGLGGLIAPFIAIKLIDMLLTVLGIV.

A run of 4 helical transmembrane segments spans residues 30–50 (LLVY…FFGI), 59–79 (LAIA…EAIA), 216–236 (ILLV…LPFT), and 255–275 (IALL…SIGI). Catalysis depends on Asp306, which acts as the 4-aspartylphosphate intermediate. ATP is bound by residues Asp343, Glu347, 376 to 383 (FTATTRMS), and Lys394. Residues Asp517 and Asp521 each coordinate Mg(2+). A run of 3 helical transmembrane segments spans residues 587-607 (FAII…LNLM), 615-635 (AILS…PLSL), and 661-681 (LIAP…LGIV).

It belongs to the cation transport ATPase (P-type) (TC 3.A.3) family. Type IA subfamily. The system is composed of three essential subunits: KdpA, KdpB and KdpC.

The protein localises to the cell membrane. It catalyses the reaction K(+)(out) + ATP + H2O = K(+)(in) + ADP + phosphate + H(+). Part of the high-affinity ATP-driven potassium transport (or Kdp) system, which catalyzes the hydrolysis of ATP coupled with the electrogenic transport of potassium into the cytoplasm. This subunit is responsible for energy coupling to the transport system and for the release of the potassium ions to the cytoplasm. The sequence is that of Potassium-transporting ATPase ATP-binding subunit from Listeria monocytogenes serovar 1/2a (strain ATCC BAA-679 / EGD-e).